A 162-amino-acid polypeptide reads, in one-letter code: NADH-quinone oxidoreductase subunit I (162 aa).

2 4Fe-4S ferredoxin-type domains span residues 53–83 (LRRYPNGEERCIACKLCEAVCPALAITIESD) and 93–122 (TRYDIDLTKCIFCGFCEESCPVDSIVETHI). Residues Cys63, Cys66, Cys69, Cys73, Cys102, Cys105, Cys108, and Cys112 each coordinate [4Fe-4S] cluster.

The protein belongs to the complex I 23 kDa subunit family. As to quaternary structure, NDH-1 is composed of 14 different subunits. Subunits NuoA, H, J, K, L, M, N constitute the membrane sector of the complex. It depends on [4Fe-4S] cluster as a cofactor.

It is found in the cell inner membrane. It carries out the reaction a quinone + NADH + 5 H(+)(in) = a quinol + NAD(+) + 4 H(+)(out). NDH-1 shuttles electrons from NADH, via FMN and iron-sulfur (Fe-S) centers, to quinones in the respiratory chain. The immediate electron acceptor for the enzyme in this species is believed to be ubiquinone. Couples the redox reaction to proton translocation (for every two electrons transferred, four hydrogen ions are translocated across the cytoplasmic membrane), and thus conserves the redox energy in a proton gradient. This Bordetella avium (strain 197N) protein is NADH-quinone oxidoreductase subunit I.